We begin with the raw amino-acid sequence, 430 residues long: Terminal nucleotidyltransferase 5B (430 aa).

Positions 1–46 (MMPSESETESRDRAAAQVGTAAAAAVAKAAPAGGGPDPEASSASLG) are disordered. Over residues 15–44 (AAQVGTAAAAAVAKAAPAGGGPDPEASSAS) the composition is skewed to low complexity.

It belongs to the TENT family.

It localises to the cytoplasm. The protein resides in the nucleus. It catalyses the reaction RNA(n) + ATP = RNA(n)-3'-adenine ribonucleotide + diphosphate. In terms of biological role, catalyzes the transfer of one adenosine molecule from an ATP to an mRNA poly(A) tail bearing a 3'-OH terminal group in an ATP hydrolysis-dependent manner. May be involved in maintaining the translation efficiency of at least some genes through preventing degradation of their mRNAs. Prefers RNA molecules that are adenosine-rich close to 3'-end. In addition, may inhibit cell proliferation and cell cycle progression through ubiquitination of beta-catenin/CTNNB1. This is Terminal nucleotidyltransferase 5B from Bos taurus (Bovine).